A 256-amino-acid polypeptide reads, in one-letter code: Triosephosphate isomerase (256 aa).

9–11 (NWK) is a binding site for substrate. Histidine 97 acts as the Electrophile in catalysis. Glutamate 169 functions as the Proton acceptor in the catalytic mechanism. Substrate is bound by residues glycine 175, serine 214, and 235 to 236 (GG).

The protein belongs to the triosephosphate isomerase family. Homodimer.

Its subcellular location is the cytoplasm. The enzyme catalyses D-glyceraldehyde 3-phosphate = dihydroxyacetone phosphate. The protein operates within carbohydrate biosynthesis; gluconeogenesis. It participates in carbohydrate degradation; glycolysis; D-glyceraldehyde 3-phosphate from glycerone phosphate: step 1/1. In terms of biological role, involved in the gluconeogenesis. Catalyzes stereospecifically the conversion of dihydroxyacetone phosphate (DHAP) to D-glyceraldehyde-3-phosphate (G3P). This Vibrio vulnificus (strain CMCP6) protein is Triosephosphate isomerase.